The following is a 75-amino-acid chain: Exodeoxyribonuclease 7 small subunit (75 aa).

This sequence belongs to the XseB family. In terms of assembly, heterooligomer composed of large and small subunits.

The protein localises to the cytoplasm. The catalysed reaction is Exonucleolytic cleavage in either 5'- to 3'- or 3'- to 5'-direction to yield nucleoside 5'-phosphates.. Bidirectionally degrades single-stranded DNA into large acid-insoluble oligonucleotides, which are then degraded further into small acid-soluble oligonucleotides. This chain is Exodeoxyribonuclease 7 small subunit, found in Chlamydia felis (strain Fe/C-56) (Chlamydophila felis).